The following is a 185-amino-acid chain: Anaphase-promoting complex subunit 10 (185 aa).

Threonine 2 is subject to N-acetylthreonine. A DOC domain is found at 2–185 (TTPNKTPPGA…IDFMMYRSIR (184 aa)). Position 169 is an N6-acetyllysine (lysine 169).

The protein belongs to the APC10 family. In terms of assembly, the mammalian APC/C is composed at least of 14 distinct subunits ANAPC1, ANAPC2, CDC27/APC3, ANAPC4, ANAPC5, CDC16/APC6, ANAPC7, CDC23/APC8, ANAPC10, ANAPC11, CDC26/APC12, ANAPC13, ANAPC15 and ANAPC16 that assemble into a complex of at least 19 chains with a combined molecular mass of around 1.2 MDa; APC/C interacts with FZR1 and FBXO5. The C-terminus of APC10 binds to CDC27/APC3. Interacts with PIWIL1; interaction only takes place when PIWIL1 binds piRNA. Interacts with FBXO43; the interaction is direct.

It participates in protein modification; protein ubiquitination. In terms of biological role, component of the anaphase promoting complex/cyclosome (APC/C), a cell cycle-regulated E3 ubiquitin ligase that controls progression through mitosis and the G1 phase of the cell cycle. The APC/C complex acts by mediating ubiquitination and subsequent degradation of target proteins: it mainly mediates the formation of 'Lys-11'-linked polyubiquitin chains and, to a lower extent, the formation of 'Lys-48'- and 'Lys-63'-linked polyubiquitin chains. The APC/C complex catalyzes assembly of branched 'Lys-11'-/'Lys-48'-linked branched ubiquitin chains on target proteins. The protein is Anaphase-promoting complex subunit 10 (ANAPC10) of Bos taurus (Bovine).